Reading from the N-terminus, the 81-residue chain is Photosystem I iron-sulfur center (81 aa).

4Fe-4S ferredoxin-type domains are found at residues 2-31 and 39-68; these read SHSVKIYDTCIGCTQCVRACPTDVLEMIPW and IASAPRTEDCVGCKRCESACPTDFLSVRVY. [4Fe-4S] cluster-binding residues include Cys-11, Cys-14, Cys-17, Cys-21, Cys-48, Cys-51, Cys-54, and Cys-58.

The eukaryotic PSI reaction center is composed of at least 11 subunits. It depends on [4Fe-4S] cluster as a cofactor.

The protein resides in the plastid. The protein localises to the chloroplast thylakoid membrane. It carries out the reaction reduced [plastocyanin] + hnu + oxidized [2Fe-2S]-[ferredoxin] = oxidized [plastocyanin] + reduced [2Fe-2S]-[ferredoxin]. Apoprotein for the two 4Fe-4S centers FA and FB of photosystem I (PSI); essential for photochemical activity. FB is the terminal electron acceptor of PSI, donating electrons to ferredoxin. The C-terminus interacts with PsaA/B/D and helps assemble the protein into the PSI complex. Required for binding of PsaD and PsaE to PSI. PSI is a plastocyanin-ferredoxin oxidoreductase, converting photonic excitation into a charge separation, which transfers an electron from the donor P700 chlorophyll pair to the spectroscopically characterized acceptors A0, A1, FX, FA and FB in turn. The chain is Photosystem I iron-sulfur center from Spinacia oleracea (Spinach).